The primary structure comprises 633 residues: Carbon monoxide dehydrogenase 2 (633 aa).

The [4Fe-4S] cluster site is built by C44, C53, C56, C61, and C73. H264, C343, C453, C484, and C525 together coordinate [Ni-4Fe-5S] cluster.

Belongs to the Ni-containing carbon monoxide dehydrogenase family. As to quaternary structure, homodimer. The cofactor is [4Fe-4S] cluster. [Ni-4Fe-5S] cluster is required as a cofactor.

It catalyses the reaction CO + 2 oxidized [2Fe-2S]-[ferredoxin] + H2O = 2 reduced [2Fe-2S]-[ferredoxin] + CO2 + 2 H(+). In terms of biological role, CODH oxidizes carbon monoxide coupled, via CooF, to the reduction of a hydrogen cation by a hydrogenase (possibly CooH). The protein is Carbon monoxide dehydrogenase 2 (cooS2) of Methanosarcina acetivorans (strain ATCC 35395 / DSM 2834 / JCM 12185 / C2A).